Consider the following 375-residue polypeptide: 23S rRNA (uracil(747)-C(5))-methyltransferase RlmC (375 aa).

[4Fe-4S] cluster-binding residues include Cys-3, Cys-11, Cys-14, and Cys-87. S-adenosyl-L-methionine-binding residues include Gln-212, Phe-241, Glu-262, and Asn-307. Cys-334 functions as the Nucleophile in the catalytic mechanism.

The protein belongs to the class I-like SAM-binding methyltransferase superfamily. RNA M5U methyltransferase family. RlmC subfamily.

The enzyme catalyses uridine(747) in 23S rRNA + S-adenosyl-L-methionine = 5-methyluridine(747) in 23S rRNA + S-adenosyl-L-homocysteine + H(+). Functionally, catalyzes the formation of 5-methyl-uridine at position 747 (m5U747) in 23S rRNA. This is 23S rRNA (uracil(747)-C(5))-methyltransferase RlmC from Vibrio cholerae serotype O1 (strain ATCC 39541 / Classical Ogawa 395 / O395).